The chain runs to 768 residues: Levansucrase (768 aa).

The first 36 residues, 1 to 36 (MLENKKHKKMSLSGKSLLMGTLSTAAIVLSASTVNA), serve as a signal peptide directing secretion. 4 stretches are compositionally biased toward polar residues: residues 57-68 (SASVNKNDNSGL), 80-99 (TETN…SQVN), 106-134 (SSTQ…QDSD), and 143-153 (NNSQGQSSTSS). The segment at 57 to 158 (SASVNKNDNS…SSTSSEKTEL (102 aa)) is disordered. Sucrose is bound by residues W250, D251, and S320. D251 acts as the Nucleophile in catalysis. Position 398 (D398) interacts with Ca(2+). Residues R403 and D404 each coordinate sucrose. Ca(2+) contacts are provided by Q429, N468, and D502. E503 serves as a coordination point for sucrose. E505 functions as the Proton donor/acceptor in the catalytic mechanism. Residue R523 participates in sucrose binding. The tract at residues 688–736 (HQPVTPNVPTTPEKPENPTTPNTPDTPRTPEVPTTPVKKTTQSELPKAG) is disordered. Over residues 691 to 727 (VTPNVPTTPEKPENPTTPNTPDTPRTPEVPTTPVKKT) the composition is skewed to low complexity. Residues 732 to 736 (LPKAG) carry the LPXTG sorting signal motif. A735 carries the pentaglycyl murein peptidoglycan amidated alanine modification. The propeptide at 736–768 (GAKDGIAATILGAISSMLGVIGLAGISKRKRNN) is removed by sortase.

This sequence belongs to the glycosyl hydrolase 68 family.

The protein localises to the secreted. It localises to the cell wall. It is found in the cell surface. The catalysed reaction is [6)-beta-D-fructofuranosyl-(2-&gt;](n) alpha-D-glucopyranoside + sucrose = [6)-beta-D-fructofuranosyl-(2-&gt;](n+1) alpha-D-glucopyranoside + D-glucose. With respect to regulation, calcium ions are required for optimal activity, but do not seem to be essential since addition of EDTA causes only a 48% drop in activity. Ca(2+) may play an important structural role and promote stability of levansucrase. Functionally, fructosyltransferase that catalyzes the polymerization of the fructose moiety of sucrose to produce levan polymer and the fructo-oligosaccharide (FOS) 1-kestose. Is also able to convert raffinose into a fructan polymer and a single oligosaccharide (most likely Gal-Glc-Frc-Frc) in vitro; however, L.gasseri strain DSM 20077 is unable to ferment raffinose. Also displays sucrose hydrolase activity. In Lactobacillus gasseri, this protein is Levansucrase.